A 380-amino-acid chain; its full sequence is MASLRKTHPLLKIANDALVDLPSPANISVWWNFGSLLGLCLASQILTGLFLAMHYTPDVESAFNSVAHICRDVNFGWLIRNMHANGASFFFICLYLHIGRGLYYGSYLFVETWNVGVVLLLLVMMTAFVGYVLPWGQMSFWGATVITNLLSAVPYVGTTLVEWIWGGFSVDNATLTRFFAFHFLFPFVILAAAVLHLLFLHETGSNNPIGLNSNADKISFHPYFTYKDLLGFAVLLMGLTSLALFSPNLLGDPDNFTPANPMVTPPHIKPEWYFLFAYAILRSIPNKLGGVLALLASILILMVVPFLHTSKQRALTFRPASQFLFWTLVADVVVLTWIGGMPAEQPFIIIGQVASVLYFSLFLVLFPLAGWAENKVLGWT.

4 consecutive transmembrane segments (helical) span residues 33 to 53 (FGSLLGLCLASQILTGLFLAM), 77 to 98 (WLIRNMHANGASFFFICLYLHI), 113 to 133 (WNVGVVLLLLVMMTAFVGYVL), and 178 to 198 (FFAFHFLFPFVILAAAVLHLL). 2 residues coordinate heme b: histidine 83 and histidine 97. Histidine 182 and histidine 196 together coordinate heme b. Histidine 201 is a binding site for a ubiquinone. 4 helical membrane passes run 226–246 (YKDLLGFAVLLMGLTSLALFS), 288–308 (LGGVLALLASILILMVVPFLH), 320–340 (ASQFLFWTLVADVVVLTWIGG), and 347–367 (FIIIGQVASVLYFSLFLVLFP).

It belongs to the cytochrome b family. In terms of assembly, the cytochrome bc1 complex contains 3 respiratory subunits (MT-CYB, CYC1 and UQCRFS1), 2 core proteins (UQCRC1 and UQCRC2) and probably 6 low-molecular weight proteins. Requires heme b as cofactor.

The protein resides in the mitochondrion inner membrane. In terms of biological role, component of the ubiquinol-cytochrome c reductase complex (complex III or cytochrome b-c1 complex) that is part of the mitochondrial respiratory chain. The b-c1 complex mediates electron transfer from ubiquinol to cytochrome c. Contributes to the generation of a proton gradient across the mitochondrial membrane that is then used for ATP synthesis. This is Cytochrome b (mt-cyb) from Scomber scombrus (Atlantic mackerel).